Here is a 248-residue protein sequence, read N- to C-terminus: 3-deoxy-manno-octulosonate cytidylyltransferase (248 aa).

The protein belongs to the KdsB family.

Its subcellular location is the cytoplasm. The catalysed reaction is 3-deoxy-alpha-D-manno-oct-2-ulosonate + CTP = CMP-3-deoxy-beta-D-manno-octulosonate + diphosphate. It functions in the pathway nucleotide-sugar biosynthesis; CMP-3-deoxy-D-manno-octulosonate biosynthesis; CMP-3-deoxy-D-manno-octulosonate from 3-deoxy-D-manno-octulosonate and CTP: step 1/1. Its pathway is bacterial outer membrane biogenesis; lipopolysaccharide biosynthesis. Functionally, activates KDO (a required 8-carbon sugar) for incorporation into bacterial lipopolysaccharide in Gram-negative bacteria. The chain is 3-deoxy-manno-octulosonate cytidylyltransferase from Salmonella arizonae (strain ATCC BAA-731 / CDC346-86 / RSK2980).